The chain runs to 181 residues: 6,7-dimethyl-8-ribityllumazine synthase 2 (181 aa).

Residues 1 to 23 (MSLPMTETVTDPAETAPPTAERS) form a disordered region. Residues tryptophan 40, 74–76 (SFE), 98–100 (LVV), and serine 129 contribute to the 5-amino-6-(D-ribitylamino)uracil site.

Belongs to the DMRL synthase family.

It carries out the reaction (2S)-2-hydroxy-3-oxobutyl phosphate + 5-amino-6-(D-ribitylamino)uracil = 6,7-dimethyl-8-(1-D-ribityl)lumazine + phosphate + 2 H2O + H(+). Its pathway is cofactor biosynthesis; riboflavin biosynthesis; riboflavin from 2-hydroxy-3-oxobutyl phosphate and 5-amino-6-(D-ribitylamino)uracil: step 1/2. In terms of biological role, catalyzes the formation of 6,7-dimethyl-8-ribityllumazine by condensation of 5-amino-6-(D-ribitylamino)uracil with 3,4-dihydroxy-2-butanone 4-phosphate. This is the penultimate step in the biosynthesis of riboflavin. This is 6,7-dimethyl-8-ribityllumazine synthase 2 from Rhodopseudomonas palustris (strain ATCC BAA-98 / CGA009).